We begin with the raw amino-acid sequence, 477 residues long: Glycogen synthase (477 aa).

ADP-alpha-D-glucose is bound at residue lysine 15.

Belongs to the glycosyltransferase 1 family. Bacterial/plant glycogen synthase subfamily.

The enzyme catalyses [(1-&gt;4)-alpha-D-glucosyl](n) + ADP-alpha-D-glucose = [(1-&gt;4)-alpha-D-glucosyl](n+1) + ADP + H(+). It functions in the pathway glycan biosynthesis; glycogen biosynthesis. Its function is as follows. Synthesizes alpha-1,4-glucan chains using ADP-glucose. The polypeptide is Glycogen synthase (Halorhodospira halophila (strain DSM 244 / SL1) (Ectothiorhodospira halophila (strain DSM 244 / SL1))).